The primary structure comprises 306 residues: Putative secretory carrier-associated membrane protein 1 (306 aa).

The interval 1–60 (MAGRYDSNPFEEDDVNPFSEQARGKAGGQPSYGGGAFYMPNPRNVPSMSSNSRLSPLPPE) is disordered. Over 1 to 141 (MAGRYDSNPF…EIPSHLQRMQ (141 aa)) the chain is Cytoplasmic. A compositionally biased stretch (gly residues) spans 25 to 36 (KAGGQPSYGGGA). Polar residues predominate over residues 44–54 (NVPSMSSNSRL). The stretch at 72 to 109 (LDSSKDLKNREKELQAREAELNKREKELKRREEAAARA) forms a coiled coil. 4 consecutive transmembrane segments (helical) span residues 142-162 (YVAF…VIAV), 174-194 (IWLL…VLWY), 209-229 (FGLF…SAVA), and 257-277 (IFYF…IWVI). The Cytoplasmic segment spans residues 278–306 (QQVYMYFRGSGKAAEMKRDATRGAMRAAF).

It belongs to the SCAMP family.

The protein resides in the cell membrane. It is found in the cytoplasmic vesicle. It localises to the secretory vesicle membrane. Probably involved in membrane trafficking. This is Putative secretory carrier-associated membrane protein 1 (SCAMP1) from Oryza sativa subsp. indica (Rice).